The following is a 230-amino-acid chain: Flavin-dependent thymidylate synthase (230 aa).

The ThyX domain occupies 1 to 217; that stretch reads MEIKVLEKGF…PVTYEAFLNF (217 aa). FAD is bound by residues Ser55, 78 to 80, and Glu86; that span reads RHR. Residues 75–78, 86–90, and Arg156 each bind dUMP; these read QLVR and ERSGR. A ThyX motif motif is present at residues 78–88; it reads RHRIASINERS. FAD is bound by residues 172-174 and Asn178; that span reads NAR. Arg183 is a binding site for dUMP. Catalysis depends on Arg183, which acts as the Involved in ionization of N3 of dUMP, leading to its activation.

Belongs to the thymidylate synthase ThyX family. As to quaternary structure, homotetramer. Requires FAD as cofactor.

The catalysed reaction is dUMP + (6R)-5,10-methylene-5,6,7,8-tetrahydrofolate + NADPH + H(+) = dTMP + (6S)-5,6,7,8-tetrahydrofolate + NADP(+). It functions in the pathway pyrimidine metabolism; dTTP biosynthesis. Functionally, catalyzes the reductive methylation of 2'-deoxyuridine-5'-monophosphate (dUMP) to 2'-deoxythymidine-5'-monophosphate (dTMP) while utilizing 5,10-methylenetetrahydrofolate (mTHF) as the methyl donor, and NADPH and FADH(2) as the reductant. This chain is Flavin-dependent thymidylate synthase, found in Kosmotoga olearia (strain ATCC BAA-1733 / DSM 21960 / TBF 19.5.1).